The chain runs to 1614 residues: Chitin synthase csmA (1614 aa).

A disordered region spans residues 1 to 22 (MAGPAPSGRTPSHAQSSLPSLP). The Myosin motor domain maps to 1–788 (MAGPAPSGRT…CWADLAKLGE (788 aa)). Positions 9–19 (RTPSHAQSSLP) are enriched in polar residues. 105 to 112 (GESGSGKT) is an ATP binding site. Residues 600-650 (QVSSKPMRMPSMARRKAGPSRLAFDAPEGDDQDEYDSQAGSMSKSSARRKS) form a disordered region. Residues 626–635 (PEGDDQDEYD) are compositionally biased toward acidic residues. Residues 668-692 (LDIVSKCLNSANLNPYFVFCLKPND) are actin-binding. Transmembrane regions (helical) follow at residues 898–918 (WMAI…KTFG) and 937–957 (LIIW…PGLI). Residues 961–1020 (QHVYSTAELSSHNGKDGHNSFVAIRGIVFNLDKFMPSHYPDIVPEKSLKKYAGTDATGLF) enclose the Cytochrome b5 heme-binding domain. Asparagine 1047 and asparagine 1072 each carry an N-linked (GlcNAc...) asparagine glycan. The chain crosses the membrane as a helical span at residues 1209 to 1229 (FILAISIFICLIVVFKFLAAL). Asparagine 1572 is a glycosylation site (N-linked (GlcNAc...) asparagine).

In the N-terminal section; belongs to the TRAFAC class myosin-kinesin ATPase superfamily. Myosin family. It in the C-terminal section; belongs to the chitin synthase family. Class V subfamily.

The protein localises to the cell membrane. The protein resides in the cell septum. It localises to the cell tip. It catalyses the reaction [(1-&gt;4)-N-acetyl-beta-D-glucosaminyl](n) + UDP-N-acetyl-alpha-D-glucosamine = [(1-&gt;4)-N-acetyl-beta-D-glucosaminyl](n+1) + UDP + H(+). Its function is as follows. Polymerizes chitin, a structural polymer of the cell wall and septum, by transferring the sugar moiety of UDP-GlcNAc to the non-reducing end of the growing chitin polymer. Acts as the major chitin synthase in Aspergillus niger involved in cell wall integrity which is principally responsible for chitin synthesis at the lateral cell wall. Plays an important role in septal growth or maintenance. Mediates colony spore formation. This is Chitin synthase csmA from Aspergillus niger (strain ATCC MYA-4892 / CBS 513.88 / FGSC A1513).